The following is a 267-amino-acid chain: Tryptophan synthase alpha chain (267 aa).

Catalysis depends on proton acceptor residues glutamate 49 and aspartate 60.

The protein belongs to the TrpA family. As to quaternary structure, tetramer of two alpha and two beta chains.

It carries out the reaction (1S,2R)-1-C-(indol-3-yl)glycerol 3-phosphate + L-serine = D-glyceraldehyde 3-phosphate + L-tryptophan + H2O. Its pathway is amino-acid biosynthesis; L-tryptophan biosynthesis; L-tryptophan from chorismate: step 5/5. In terms of biological role, the alpha subunit is responsible for the aldol cleavage of indoleglycerol phosphate to indole and glyceraldehyde 3-phosphate. This Solibacter usitatus (strain Ellin6076) protein is Tryptophan synthase alpha chain.